The sequence spans 734 residues: Photosystem I P700 chlorophyll a apoprotein A2 (734 aa).

The next 8 membrane-spanning stretches (helical) occupy residues 46–69 (IFAS…FHVA), 135–158 (LYTG…LHLQ), 175–199 (LNHH…HVAI), 273–291 (IAHH…GHMY), 330–353 (LHFQ…QHMY), 369–395 (AALY…IFFI), 417–439 (AIIS…LYIH), and 517–535 (FLVH…LILV). [4Fe-4S] cluster contacts are provided by cysteine 559 and cysteine 568. A run of 2 helical transmembrane segments spans residues 575–596 (AFYL…YWHW) and 643–665 (LSVW…MFLI). 3 residues coordinate chlorophyll a: histidine 654, methionine 662, and tyrosine 670. Tryptophan 671 provides a ligand contact to phylloquinone. A helical membrane pass occupies residues 707–727 (FVGLAHFSVGYIFTYAAFLIA).

The protein belongs to the PsaA/PsaB family. As to quaternary structure, the PsaA/B heterodimer binds the P700 chlorophyll special pair and subsequent electron acceptors. PSI consists of a core antenna complex that captures photons, and an electron transfer chain that converts photonic excitation into a charge separation. The eukaryotic PSI reaction center is composed of at least 11 subunits. P700 is a chlorophyll a/chlorophyll a' dimer, A0 is one or more chlorophyll a, A1 is one or both phylloquinones and FX is a shared 4Fe-4S iron-sulfur center. is required as a cofactor.

It localises to the plastid membrane. The catalysed reaction is reduced [plastocyanin] + hnu + oxidized [2Fe-2S]-[ferredoxin] = oxidized [plastocyanin] + reduced [2Fe-2S]-[ferredoxin]. Functionally, psaA and PsaB bind P700, the primary electron donor of photosystem I (PSI), as well as the electron acceptors A0, A1 and FX. PSI is a plastocyanin-ferredoxin oxidoreductase, converting photonic excitation into a charge separation, which transfers an electron from the donor P700 chlorophyll pair to the spectroscopically characterized acceptors A0, A1, FX, FA and FB in turn. Oxidized P700 is reduced on the lumenal side of the thylakoid membrane by plastocyanin. The chain is Photosystem I P700 chlorophyll a apoprotein A2 from Cuscuta sandwichiana (Kauna'oa).